A 347-amino-acid chain; its full sequence is Phenylalanine--tRNA ligase alpha subunit (347 aa).

Glu-261 serves as a coordination point for Mg(2+).

It belongs to the class-II aminoacyl-tRNA synthetase family. Phe-tRNA synthetase alpha subunit type 1 subfamily. Tetramer of two alpha and two beta subunits. Mg(2+) serves as cofactor.

Its subcellular location is the cytoplasm. The catalysed reaction is tRNA(Phe) + L-phenylalanine + ATP = L-phenylalanyl-tRNA(Phe) + AMP + diphosphate + H(+). The chain is Phenylalanine--tRNA ligase alpha subunit from Streptococcus equi subsp. equi (strain 4047).